A 377-amino-acid polypeptide reads, in one-letter code: Nitric oxide reductase FlRd-NAD(+) reductase (377 aa).

It belongs to the FAD-dependent oxidoreductase family. It depends on FAD as a cofactor.

The protein resides in the cytoplasm. It catalyses the reaction 2 reduced [nitric oxide reductase rubredoxin domain] + NAD(+) + H(+) = 2 oxidized [nitric oxide reductase rubredoxin domain] + NADH. It participates in nitrogen metabolism; nitric oxide reduction. In terms of biological role, one of at least two accessory proteins for anaerobic nitric oxide (NO) reductase. Reduces the rubredoxin moiety of NO reductase. This Escherichia fergusonii (strain ATCC 35469 / DSM 13698 / CCUG 18766 / IAM 14443 / JCM 21226 / LMG 7866 / NBRC 102419 / NCTC 12128 / CDC 0568-73) protein is Nitric oxide reductase FlRd-NAD(+) reductase.